Here is a 458-residue protein sequence, read N- to C-terminus: tRNA modification GTPase MnmE (458 aa).

Arginine 26, glutamate 88, and arginine 127 together coordinate (6S)-5-formyl-5,6,7,8-tetrahydrofolate. Residues 224–378 (GLSTAIIGRP…IEDRINQLFF (155 aa)) enclose the TrmE-type G domain. Residue asparagine 234 participates in K(+) binding. GTP is bound by residues 234 to 239 (NVGKSS), 253 to 259 (TDIAGTT), and 278 to 281 (DTAG). Mg(2+) is bound at residue serine 238. 3 residues coordinate K(+): threonine 253, isoleucine 255, and threonine 258. Threonine 259 provides a ligand contact to Mg(2+). Residue lysine 458 participates in (6S)-5-formyl-5,6,7,8-tetrahydrofolate binding.

It belongs to the TRAFAC class TrmE-Era-EngA-EngB-Septin-like GTPase superfamily. TrmE GTPase family. Homodimer. Heterotetramer of two MnmE and two MnmG subunits. K(+) serves as cofactor.

The protein resides in the cytoplasm. Exhibits a very high intrinsic GTPase hydrolysis rate. Involved in the addition of a carboxymethylaminomethyl (cmnm) group at the wobble position (U34) of certain tRNAs, forming tRNA-cmnm(5)s(2)U34. The protein is tRNA modification GTPase MnmE of Streptococcus pyogenes serotype M3 (strain ATCC BAA-595 / MGAS315).